The primary structure comprises 93 residues: Small ribosomal subunit protein bS16 (93 aa).

Belongs to the bacterial ribosomal protein bS16 family.

The sequence is that of Small ribosomal subunit protein bS16 from Roseiflexus castenholzii (strain DSM 13941 / HLO8).